We begin with the raw amino-acid sequence, 163 residues long: UPF0523 protein B (163 aa).

It belongs to the UPF0523 family.

The sequence is that of UPF0523 protein B from Dictyostelium discoideum (Social amoeba).